A 355-amino-acid polypeptide reads, in one-letter code: (3aS,4S,5R,7aS)-5-hydroxy-7a-methyl-1-oxo-octahydro-1H-indene-4-carboxyl-CoA dehydrogenase (355 aa).

FMN contacts are provided by residues 21–23 (GMG), 173–175 (AGG), and 196–197 (GT).

It belongs to the nitronate monooxygenase family.

The enzyme catalyses (3aS,4S,5R,7aS)-5-hydroxy-7a-methyl-1-oxo-octahydro-1H-indene-4-carboxyl-CoA + NAD(+) = (5R,7aS)-5-hydroxy-7a-methyl-1-oxo-2,3,5,6,7,7a-hexahydro-1H-indene-carboxyl-CoA + NADH + H(+). Its pathway is steroid metabolism; cholesterol degradation. Requires the presence of IpdF. Functionally, involved in the final steps of cholesterol and steroid degradation. Probably catalyzes the introduction of a double bound into the C ring of 5OH-HIC-CoA, leading to the formation of (5R,7aS)-5-hydroxy-7a-methyl-1-oxo-3,5,6,7-tetrahydro-2H-indene-4-carboxyl-CoA. In Mycobacterium tuberculosis (strain ATCC 25618 / H37Rv), this protein is (3aS,4S,5R,7aS)-5-hydroxy-7a-methyl-1-oxo-octahydro-1H-indene-4-carboxyl-CoA dehydrogenase.